The primary structure comprises 441 residues: Protein dcd1A (441 aa).

An N-terminal signal peptide occupies residues 1–23; it reads MKIFNKLIFLIIQCILIISVTNA. Asn45, Asn261, Asn308, and Asn419 each carry an N-linked (GlcNAc...) asparagine glycan.

Its subcellular location is the secreted. This is Protein dcd1A (dcd1A) from Dictyostelium discoideum (Social amoeba).